The primary structure comprises 389 residues: Succinate--CoA ligase [ADP-forming] subunit beta (389 aa).

One can recognise an ATP-grasp domain in the interval 9 to 244 (KQLLAEYGIP…KTQEDETEVT (236 aa)). ATP is bound by residues Lys46, 53–55 (GRG), Gly102, and Glu107. Mg(2+)-binding residues include Asn199 and Asp213. Substrate is bound by residues Asn264 and 321–323 (GIV).

The protein belongs to the succinate/malate CoA ligase beta subunit family. As to quaternary structure, heterotetramer of two alpha and two beta subunits. Mg(2+) is required as a cofactor.

It catalyses the reaction succinate + ATP + CoA = succinyl-CoA + ADP + phosphate. The enzyme catalyses GTP + succinate + CoA = succinyl-CoA + GDP + phosphate. Its pathway is carbohydrate metabolism; tricarboxylic acid cycle; succinate from succinyl-CoA (ligase route): step 1/1. Succinyl-CoA synthetase functions in the citric acid cycle (TCA), coupling the hydrolysis of succinyl-CoA to the synthesis of either ATP or GTP and thus represents the only step of substrate-level phosphorylation in the TCA. The beta subunit provides nucleotide specificity of the enzyme and binds the substrate succinate, while the binding sites for coenzyme A and phosphate are found in the alpha subunit. In Xanthomonas oryzae pv. oryzae (strain MAFF 311018), this protein is Succinate--CoA ligase [ADP-forming] subunit beta.